The following is a 261-amino-acid chain: Lys-63-specific deubiquitinase BRCC36 (261 aa).

An MPN domain is found at Val-6–Gln-149. Residues His-92, His-94, and Asp-105 each coordinate Zn(2+). The JAMM motif motif lies at His-92–Asp-105.

It belongs to the peptidase M67A family. BRCC36 subfamily. In terms of assembly, component of the BRCA1-A complex, at least composed of brca1, bard1, uimc1/rap80, abraxas1, brcc3/brcc36, babam2 and babam1/nba1. In the BRCA1-A complex, interacts directly with ABRAXAS1 and babam2. Component of the BRISC complex, at least composed of ABRAXAS2, brcc3/brcc36, babam2 and babam1/nba1. Within the complex, interacts directly with abraxas2. Both the BRCA1-A complex and the BRISC complex bind polyubiquitin. Requires Zn(2+) as cofactor.

It is found in the nucleus. The protein resides in the cytoplasm. Its subcellular location is the cytoskeleton. It localises to the spindle pole. Functionally, metalloprotease that specifically cleaves 'Lys-63'-linked polyubiquitin chains. Does not have activity toward 'Lys-48'-linked polyubiquitin chains. Component of the BRCA1-A complex, a complex that specifically recognizes 'Lys-63'-linked ubiquitinated histones H2A and H2AX at DNA lesions sites, leading to target the brca1-bard1 heterodimer to sites of DNA damage at double-strand breaks (DSBs). In the BRCA1-A complex, it specifically removes 'Lys-63'-linked ubiquitin on histones H2A and H2AX, antagonizing the rnf8-dependent ubiquitination at double-strand breaks (DSBs). Catalytic subunit of the BRISC complex, a multiprotein complex that specifically cleaves 'Lys-63'-linked ubiquitin in various substrates. Mediates the specific 'Lys-63'-specific deubiquitination associated with the COP9 signalosome complex (CSN), via the interaction of the BRISC complex with the CSN complex. The BRISC complex is required for normal mitotic spindle assembly and microtubule attachment to kinetochores via its role in deubiquitinating numa1. Plays a role in interferon signaling via its role in the deubiquitination of the interferon receptor ifnar1; deubiquitination increases ifnar1 activity by enhancing its stability and cell surface expression. Acts as a regulator of the NLRP3 inflammasome by mediating deubiquitination of nlrp3. Down-regulates the response to bacterial lipopolysaccharide (LPS) via its role in ifnar1 deubiquitination. This is Lys-63-specific deubiquitinase BRCC36 (brcc3) from Xenopus laevis (African clawed frog).